The following is a 119-amino-acid chain: MEFGLSWIFLAAILKGVQCEVQLVESGGGLVKPGGSLRLSCAASGFTFSNAWMSWVRQAPGKGLEWVGRIKSKTDGGTTDYAAPVKGRFTISRDDSKNTLYLQMNSLKTEDTAVYYCTT.

Residues 1–19 (MEFGLSWIFLAAILKGVQC) form the signal peptide. The interval 20–44 (EVQLVESGGGLVKPGGSLRLSCAAS) is framework-1. Residues 20–119 (EVQLVESGGG…EDTAVYYCTT (100 aa)) enclose the Ig-like domain. The cysteines at positions 41 and 117 are disulfide-linked. The tract at residues 45–52 (GFTFSNAW) is complementarity-determining-1. A framework-2 region spans residues 53–69 (MSWVRQAPGKGLEWVGR). The complementarity-determining-2 stretch occupies residues 70 to 79 (IKSKTDGGTT). Residues 80–117 (DYAAPVKGRFTISRDDSKNTLYLQMNSLKTEDTAVYYC) form a framework-3 region. The segment at 118–119 (TT) is complementarity-determining-3.

In terms of assembly, immunoglobulins are composed of two identical heavy chains and two identical light chains; disulfide-linked.

It localises to the secreted. The protein localises to the cell membrane. V region of the variable domain of immunoglobulin heavy chains that participates in the antigen recognition. Immunoglobulins, also known as antibodies, are membrane-bound or secreted glycoproteins produced by B lymphocytes. In the recognition phase of humoral immunity, the membrane-bound immunoglobulins serve as receptors which, upon binding of a specific antigen, trigger the clonal expansion and differentiation of B lymphocytes into immunoglobulins-secreting plasma cells. Secreted immunoglobulins mediate the effector phase of humoral immunity, which results in the elimination of bound antigens. The antigen binding site is formed by the variable domain of one heavy chain, together with that of its associated light chain. Thus, each immunoglobulin has two antigen binding sites with remarkable affinity for a particular antigen. The variable domains are assembled by a process called V-(D)-J rearrangement and can then be subjected to somatic hypermutations which, after exposure to antigen and selection, allow affinity maturation for a particular antigen. The sequence is that of Immunoglobulin heavy variable 3-15 from Homo sapiens (Human).